Reading from the N-terminus, the 348-residue chain is Sorbitol dehydrogenase (348 aa).

Zn(2+)-binding residues include Cys-40, His-65, and Glu-66. NAD(+) is bound by residues Ile-179, Asp-199, Arg-204, 269-271, and 293-295; these read VGI and SFR. Arg-295 serves as a coordination point for substrate.

Belongs to the zinc-containing alcohol dehydrogenase family. As to quaternary structure, homotetramer. Requires Zn(2+) as cofactor.

It carries out the reaction xylitol + NAD(+) = D-xylulose + NADH + H(+). The catalysed reaction is L-iditol + NAD(+) = keto-L-sorbose + NADH + H(+). It catalyses the reaction keto-D-fructose + NADH + H(+) = D-sorbitol + NAD(+). Its function is as follows. Polyol dehydrogenase that catalyzes the reversible NAD(+)-dependent oxidation of various sugar alcohols. Is active with xylitol, L-iditol and D-sorbitol (D-glucitol) as substrates, leading to the C2-oxidized products D-xylulose, L-sorbose and D-fructose, respectively. Is a key enzyme in the polyol pathway that interconverts glucose and fructose via sorbitol, which constitutes an important alternate route for glucose metabolism. The sequence is that of Sorbitol dehydrogenase (SDH) from Bombyx mori (Silk moth).